The chain runs to 528 residues: MFFQTGLLLSLSLWTKVAYAAFGITTSSSSYVIDAGSANPLKFTVSRSSCDITSINYSGTELQYASKGSHISSGLGRATVSATQDGDYIKVTCATSTLTHYMVVHHGDSTIHMATHITAEPSIGELRFIARLKSDVLPNEEPFGDVSTTAGGTAIEGSDVFLVNGKTRSKFYSSQRFIDDQRHCISGSAHRVCMILNQYESSSGGPFHRDIDANNGGGFNALYWYMNSGHVQTEPYRMGLHGPYSMVFSRSGMPGTNIDTSFFANLNIKGYVPASGRGTVTGKASGADSRMKWVVHWHNTAAQYWTYTASDGSFTSPAMKPGTYTMVYYQGEYKVAETSVTVRAGSKITKNISGSVKTGKTIFKIGEWDGQPTGFRNADKQLRMHPSDSRMAAWGPLTYTVGRSAPSDFPMAVFKSVNNPVTIKFTASAAQTAAATLRIGTTLSFAGGRPQAKINSYTAAAPPAPKNLDSRGVTRGAYRGLGEVYDVAIPAGTIVAGVNTITISVVSGNSGEKFLSPNFVFDCVELFQ.

The signal sequence occupies residues 1–20; it reads MFFQTGLLLSLSLWTKVAYA. Disulfide bonds link Cys-50/Cys-93 and Cys-184/Cys-193. An N-linked (GlcNAc...) asparagine glycan is attached at Asn-56. Asn-351 carries N-linked (GlcNAc...) asparagine glycosylation.

The protein belongs to the polysaccharide lyase 4 family.

The protein localises to the secreted. The catalysed reaction is Endotype eliminative cleavage of L-alpha-rhamnopyranosyl-(1-&gt;4)-alpha-D-galactopyranosyluronic acid bonds of rhamnogalacturonan I domains in ramified hairy regions of pectin leaving L-rhamnopyranose at the reducing end and 4-deoxy-4,5-unsaturated D-galactopyranosyluronic acid at the non-reducing end.. Its function is as follows. Pectinolytic enzymes consist of four classes of enzymes: pectin lyase, polygalacturonase, pectin methylesterase and rhamnogalacturonase. Degrades the rhamnogalacturonan I (RG-I) backbone of pectin. Active against linseed rhamnogalacturonan. The sequence is that of Probable rhamnogalacturonate lyase A (rglA) from Aspergillus clavatus (strain ATCC 1007 / CBS 513.65 / DSM 816 / NCTC 3887 / NRRL 1 / QM 1276 / 107).